We begin with the raw amino-acid sequence, 372 residues long: N-methyl-L-tryptophan oxidase (372 aa).

4–34 (DLIIIGSGSVGAAAGYYATRAGLKVLMTDAH) contacts FAD. Cysteine 307 carries the post-translational modification S-8alpha-FAD cysteine.

This sequence belongs to the MSOX/MTOX family. MTOX subfamily. As to quaternary structure, monomer. It depends on FAD as a cofactor.

It carries out the reaction N(alpha)-methyl-L-tryptophan + O2 + H2O = L-tryptophan + formaldehyde + H2O2. Functionally, catalyzes the oxidative demethylation of N-methyl-L-tryptophan. The chain is N-methyl-L-tryptophan oxidase from Salmonella typhi.